The chain runs to 98 residues: NADH-ubiquinone oxidoreductase chain 4L (98 aa).

Helical transmembrane passes span 1-21 (MIPTYMNIMLAFTISLLGMLT), 29-49 (SLLCLEGMMMSLFIMTTLIAL), and 61-81 (IILLVFAACEAAVGLALLVSI).

Belongs to the complex I subunit 4L family. As to quaternary structure, core subunit of respiratory chain NADH dehydrogenase (Complex I) which is composed of 45 different subunits.

It localises to the mitochondrion inner membrane. It catalyses the reaction a ubiquinone + NADH + 5 H(+)(in) = a ubiquinol + NAD(+) + 4 H(+)(out). Its function is as follows. Core subunit of the mitochondrial membrane respiratory chain NADH dehydrogenase (Complex I) which catalyzes electron transfer from NADH through the respiratory chain, using ubiquinone as an electron acceptor. Part of the enzyme membrane arm which is embedded in the lipid bilayer and involved in proton translocation. The polypeptide is NADH-ubiquinone oxidoreductase chain 4L (MT-ND4L) (Macaca ochreata subsp. brunnescens (Muna-buton macaque)).